Consider the following 377-residue polypeptide: Nitric oxide reductase FlRd-NAD(+) reductase (377 aa).

This sequence belongs to the FAD-dependent oxidoreductase family. FAD is required as a cofactor.

The protein resides in the cytoplasm. The catalysed reaction is 2 reduced [nitric oxide reductase rubredoxin domain] + NAD(+) + H(+) = 2 oxidized [nitric oxide reductase rubredoxin domain] + NADH. It functions in the pathway nitrogen metabolism; nitric oxide reduction. One of at least two accessory proteins for anaerobic nitric oxide (NO) reductase. Reduces the rubredoxin moiety of NO reductase. In Escherichia coli (strain K12 / MC4100 / BW2952), this protein is Nitric oxide reductase FlRd-NAD(+) reductase.